Here is a 310-residue protein sequence, read N- to C-terminus: Glutaminase (310 aa).

Residues serine 67, asparagine 118, glutamate 161, asparagine 168, tyrosine 192, tyrosine 244, and valine 262 each contribute to the substrate site.

This sequence belongs to the glutaminase family. As to quaternary structure, homotetramer.

It carries out the reaction L-glutamine + H2O = L-glutamate + NH4(+). The protein is Glutaminase of Legionella pneumophila (strain Corby).